Here is a 92-residue protein sequence, read N- to C-terminus: C-C motif chemokine 4 (92 aa).

Positions 1–23 (MKLGVTVLSVALLVAALCPPALS) are cleaved as a signal peptide. Cystine bridges form between C34-C58 and C35-C74.

This sequence belongs to the intercrine beta (chemokine CC) family. As to quaternary structure, homodimer.

The protein localises to the secreted. Functionally, monokine with inflammatory and chemokinetic properties. This Oryctolagus cuniculus (Rabbit) protein is C-C motif chemokine 4 (CCL4).